A 38-amino-acid polypeptide reads, in one-letter code: Photosystem II reaction center protein L (38 aa).

Residues 17–37 (SLYWGLLLIFVLAVLFSNYFF) form a helical membrane-spanning segment.

It belongs to the PsbL family. As to quaternary structure, PSII is composed of 1 copy each of membrane proteins PsbA, PsbB, PsbC, PsbD, PsbE, PsbF, PsbH, PsbI, PsbJ, PsbK, PsbL, PsbM, PsbT, PsbX, PsbY, PsbZ, Psb30/Ycf12, at least 3 peripheral proteins of the oxygen-evolving complex and a large number of cofactors. It forms dimeric complexes.

It localises to the plastid. Its subcellular location is the chloroplast thylakoid membrane. One of the components of the core complex of photosystem II (PSII). PSII is a light-driven water:plastoquinone oxidoreductase that uses light energy to abstract electrons from H(2)O, generating O(2) and a proton gradient subsequently used for ATP formation. It consists of a core antenna complex that captures photons, and an electron transfer chain that converts photonic excitation into a charge separation. This subunit is found at the monomer-monomer interface and is required for correct PSII assembly and/or dimerization. The sequence is that of Photosystem II reaction center protein L from Gnetum gnemon (Spanish joint-fir).